A 1459-amino-acid chain; its full sequence is Mediator of RNA polymerase II transcription subunit 14 (1459 aa).

The disordered stretch occupies residues 1-37; that stretch reads MAPVQLDNHQLIPPGGGGGSSGGGGSSSGSASAPAPP. Positions 14-27 are enriched in gly residues; that stretch reads PGGGGGSSGGGGSS. The short motif at 75-79 is the LXXLL motif 1 element; the sequence is LTDLL. The segment at 194–572 is interaction with STAT2; that stretch reads KQATLHQLNQ…VPNKPTQLSY (379 aa). Residues 506–830 are interaction with SREBF1; sequence LGQQRCKQSI…TKGSSISIQW (325 aa). Ser-623 and Ser-992 each carry phosphoserine. Positions 979–1171 are disordered; it reads ARRRSVNEDD…NMPPPRKLPQ (193 aa). Composition is skewed to polar residues over residues 1029 to 1059 and 1097 to 1106; these read PPTSYHSTVNQSPSMMHTQSPGNLHAASSPS and DPSSPYTMVS. 5 positions are modified to phosphoserine: Ser-1117, Ser-1124, Ser-1133, Ser-1141, and Ser-1149. The segment covering 1152–1161 has biased composition (polar residues); the sequence is AGTSSQTMPT. Positions 1187–1191 match the LXXLL motif 2 motif; the sequence is LNILL.

This sequence belongs to the Mediator complex subunit 14 family. As to quaternary structure, component of the Mediator complex, which is composed of MED1, MED4, MED6, MED7, MED8, MED9, MED10, MED11, MED12, MED13, MED13L, MED14, MED15, MED16, MED17, MED18, MED19, MED20, MED21, MED22, MED23, MED24, MED25, MED26, MED27, MED29, MED30, MED31, CCNC, CDK8 and CDC2L6/CDK11. The MED12, MED13, CCNC and CDK8 subunits form a distinct module termed the CDK8 module. Mediator containing the CDK8 module is less active than Mediator lacking this module in supporting transcriptional activation. Individual preparations of the Mediator complex lacking one or more distinct subunits have been variously termed ARC, CRSP, DRIP, PC2, SMCC and TRAP. Interacts with AR, ESR1, SREBF1 and STAT2. Interacts with GATA1.

It is found in the nucleus. Its function is as follows. Component of the Mediator complex, a coactivator involved in the regulated transcription of nearly all RNA polymerase II-dependent genes. Mediator functions as a bridge to convey information from gene-specific regulatory proteins to the basal RNA polymerase II transcription machinery. Mediator is recruited to promoters by direct interactions with regulatory proteins and serves as a scaffold for the assembly of a functional preinitiation complex with RNA polymerase II and the general transcription factors. The sequence is that of Mediator of RNA polymerase II transcription subunit 14 (Med14) from Mus musculus (Mouse).